Consider the following 340-residue polypeptide: Ephrin-B3 (340 aa).

The first 27 residues, 1–27 (MGPPHSGPGGVRVGALLLLGVLGLVSG), serve as a signal peptide directing secretion. One can recognise an Ephrin RBD domain in the interval 28–167 (LSLEPVYWNS…TRGMKVLLRV (140 aa)). Residues 28 to 226 (LSLEPVYWNS…EGPLPPPSMP (199 aa)) lie on the Extracellular side of the membrane. Intrachain disulfides connect C62-C104 and C92-C156. A disordered region spans residues 168–225 (GQSPRGGAVPRKPVSEMPMERDRGAAHSLEPGKENLPGDPTSNATSRGAEGPLPPPSM). Over residues 185–200 (PMERDRGAAHSLEPGK) the composition is skewed to basic and acidic residues. Residue N210 is glycosylated (N-linked (GlcNAc...) asparagine). The helical transmembrane segment at 227–247 (AVAGAAGGLALLLLGVAGAGG) threads the bilayer. Over 248–340 (AMCWRRRRAK…QSPPNIYYKV (93 aa)) the chain is Cytoplasmic. The disordered stretch occupies residues 254–298 (RRAKPSESRHPGPGSFGRGGSLGLGGGGGMGPREAEPGELGIALR). A compositionally biased stretch (gly residues) spans 267–284 (GSFGRGGSLGLGGGGGMG). At R271 the chain carries Omega-N-methylarginine. S274 carries the phosphoserine modification. The short motif at 338–340 (YKV) is the PDZ-binding element.

The protein belongs to the ephrin family. As to quaternary structure, interacts with GRIP1 and GRIP2. In terms of assembly, (Microbial infection) Interacts with nipah virus and hendra virus glycoprotein. As to expression, highly expressed in brain; expressed in embryonic floor plate, roof plate and hindbrain segments.

The protein resides in the membrane. Functionally, cell surface transmembrane ligand for Eph receptors, a family of receptor tyrosine kinases which are crucial for migration, repulsion and adhesion during neuronal, vascular and epithelial development. Binds promiscuously Eph receptors residing on adjacent cells, leading to contact-dependent bidirectional signaling into neighboring cells. The signaling pathway downstream of the receptor is referred to as forward signaling while the signaling pathway downstream of the ephrin ligand is referred to as reverse signaling. May play a pivotal role in forebrain function. Binds to, and induce the collapse of, commissural axons/growth cones in vitro. May play a role in constraining the orientation of longitudinally projecting axons. Its function is as follows. (Microbial infection) Acts as a receptor for nipah virus and hendra virus. The chain is Ephrin-B3 (EFNB3) from Homo sapiens (Human).